Consider the following 64-residue polypeptide: uncharacterized protein (64 aa).

This is an uncharacterized protein from Enterobacteria phage T4 (Bacteriophage T4).